We begin with the raw amino-acid sequence, 191 residues long: MKIGVLALQGAVAEHLRMLEEVGATAVPVKRVEELDDLDGLVIPGGESTTISKLMHKYGFMEAVQEFGKANKPIFGTCAGAILLAKRIQGQDDYHLGLMDIKVERNAFGRQKESFEVLMPVADVGADYPAVFIRAPYIMEVGENGQVLAKHEDKIVVARSGHYLAAAFHPELTEDTRLHKYFLDMVKEYRS.

46-48 (GES) lines the L-glutamine pocket. C78 (nucleophile) is an active-site residue. L-glutamine-binding positions include R105 and 133-134 (IR). Active-site charge relay system residues include H169 and E171.

It belongs to the glutaminase PdxT/SNO family. In the presence of PdxS, forms a dodecamer of heterodimers. Only shows activity in the heterodimer.

It carries out the reaction aldehydo-D-ribose 5-phosphate + D-glyceraldehyde 3-phosphate + L-glutamine = pyridoxal 5'-phosphate + L-glutamate + phosphate + 3 H2O + H(+). The catalysed reaction is L-glutamine + H2O = L-glutamate + NH4(+). Its pathway is cofactor biosynthesis; pyridoxal 5'-phosphate biosynthesis. Catalyzes the hydrolysis of glutamine to glutamate and ammonia as part of the biosynthesis of pyridoxal 5'-phosphate. The resulting ammonia molecule is channeled to the active site of PdxS. This Brevibacillus brevis (strain 47 / JCM 6285 / NBRC 100599) protein is Pyridoxal 5'-phosphate synthase subunit PdxT.